A 223-amino-acid polypeptide reads, in one-letter code: Ribosomal RNA small subunit methyltransferase G (223 aa).

Residues G84, L89, 135–136, and R150 each bind S-adenosyl-L-methionine; that span reads VE.

The protein belongs to the methyltransferase superfamily. RNA methyltransferase RsmG family.

The protein resides in the cytoplasm. The catalysed reaction is guanosine(527) in 16S rRNA + S-adenosyl-L-methionine = N(7)-methylguanosine(527) in 16S rRNA + S-adenosyl-L-homocysteine. Functionally, specifically methylates the N7 position of guanine in position 527 of 16S rRNA. This chain is Ribosomal RNA small subunit methyltransferase G, found in Saccharophagus degradans (strain 2-40 / ATCC 43961 / DSM 17024).